Here is a 123-residue protein sequence, read N- to C-terminus: Small ribosomal subunit protein uS12cz/uS12cy (123 aa).

The protein belongs to the universal ribosomal protein uS12 family. Part of the 30S ribosomal subunit.

It localises to the plastid. The protein localises to the chloroplast. Functionally, with S4 and S5 plays an important role in translational accuracy. Located at the interface of the 30S and 50S subunits. The polypeptide is Small ribosomal subunit protein uS12cz/uS12cy (rps12-A) (Cucumis sativus (Cucumber)).